A 152-amino-acid polypeptide reads, in one-letter code: Deoxyuridine 5'-triphosphate nucleotidohydrolase (152 aa).

Substrate-binding positions include 71 to 73 (RSG), asparagine 84, and 88 to 90 (TID).

This sequence belongs to the dUTPase family. Requires Mg(2+) as cofactor.

The catalysed reaction is dUTP + H2O = dUMP + diphosphate + H(+). The protein operates within pyrimidine metabolism; dUMP biosynthesis; dUMP from dCTP (dUTP route): step 2/2. Functionally, this enzyme is involved in nucleotide metabolism: it produces dUMP, the immediate precursor of thymidine nucleotides and it decreases the intracellular concentration of dUTP so that uracil cannot be incorporated into DNA. This Roseobacter denitrificans (strain ATCC 33942 / OCh 114) (Erythrobacter sp. (strain OCh 114)) protein is Deoxyuridine 5'-triphosphate nucleotidohydrolase.